Here is a 235-residue protein sequence, read N- to C-terminus: Large ribosomal subunit protein uL1 (235 aa).

It belongs to the universal ribosomal protein uL1 family. As to quaternary structure, part of the 50S ribosomal subunit.

Its function is as follows. Binds directly to 23S rRNA. The L1 stalk is quite mobile in the ribosome, and is involved in E site tRNA release. Protein L1 is also a translational repressor protein, it controls the translation of the L11 operon by binding to its mRNA. The chain is Large ribosomal subunit protein uL1 from Pseudarthrobacter chlorophenolicus (strain ATCC 700700 / DSM 12829 / CIP 107037 / JCM 12360 / KCTC 9906 / NCIMB 13794 / A6) (Arthrobacter chlorophenolicus).